Here is a 127-residue protein sequence, read N- to C-terminus: Glycine cleavage system H protein (127 aa).

A Lipoyl-binding domain is found at 24-106; sequence VVTVGVTFHA…YGAGWFFKLK (83 aa). An N6-lipoyllysine modification is found at K65.

Belongs to the GcvH family. In terms of assembly, the glycine cleavage system is composed of four proteins: P, T, L and H. Requires (R)-lipoate as cofactor.

Functionally, the glycine cleavage system catalyzes the degradation of glycine. The H protein shuttles the methylamine group of glycine from the P protein to the T protein. In Laribacter hongkongensis (strain HLHK9), this protein is Glycine cleavage system H protein.